A 238-amino-acid polypeptide reads, in one-letter code: Ribonuclease PH (238 aa).

Phosphate-binding positions include arginine 86 and 124–126; that span reads GTR.

The protein belongs to the RNase PH family. Homohexameric ring arranged as a trimer of dimers.

The catalysed reaction is tRNA(n+1) + phosphate = tRNA(n) + a ribonucleoside 5'-diphosphate. In terms of biological role, phosphorolytic 3'-5' exoribonuclease that plays an important role in tRNA 3'-end maturation. Removes nucleotide residues following the 3'-CCA terminus of tRNAs; can also add nucleotides to the ends of RNA molecules by using nucleoside diphosphates as substrates, but this may not be physiologically important. Probably plays a role in initiation of 16S rRNA degradation (leading to ribosome degradation) during starvation. This chain is Ribonuclease PH, found in Salmonella choleraesuis (strain SC-B67).